Consider the following 309-residue polypeptide: Low density lipoprotein receptor adapter protein 1-A (309 aa).

Residues 41–195 form the PID domain; that stretch reads LLEGMLFHLK…SGGEGASSSQ (155 aa). The interval 179-199 is disordered; the sequence is EKREKSGSGGEGASSSQSDGS. The Clathrin box signature appears at 213–217; sequence LLDLE. Positions 250-277 are AP-2 complex binding; the sequence is WELDDGLDEAFARLAESRTNPQVLDIGL. A [DE]-X(1,2)-F-X-X-[FL]-X-X-X-R motif motif is present at residues 258-267; it reads EAFARLAESR.

As to quaternary structure, interacts (via PID domain) with ldlr (via NPXY motif). Binds to soluble clathrin trimers and to the adapter protein complex 2 (AP-2, beta 2 subunit). Binds to phosphoinositides, which regulate clathrin bud assembly at the cell surface. Interacts with the VLDL receptor (vldlr). Interacts with the vitellogenin receptor. Expressed at high level during oogenesis and embryogenesis. Found in the oocyte vegetal cortex. Found at low level in the adult liver and spleen. Found at very low level in testis and heart.

It localises to the cytoplasm. Functionally, adapter protein (clathrin-associated sorting protein (CLASP)) required for efficient endocytosis of the LDL receptor (LDLR). Also involved in the vitellogenin receptor mediated endocytosis of nutrients during oogenesis. The polypeptide is Low density lipoprotein receptor adapter protein 1-A (Xenopus laevis (African clawed frog)).